The following is a 246-amino-acid chain: MADS-box protein EJ2 (246 aa).

One can recognise an MADS-box domain in the interval M1–S61. Positions T87–G177 constitute a K-box domain.

It localises to the nucleus. Functionally, MADS-box transcription factor that acts redundantly with J2 to control meristem maturation and inflorescence architecture. The polypeptide is MADS-box protein EJ2 (Solanum lycopersicum (Tomato)).